An 830-amino-acid chain; its full sequence is Periplasmic nitrate reductase (830 aa).

The segment at residues 1-31 (MKLSRRDFMKANAAVAAAAAAGMTIPTVAKA) is a signal peptide (tat-type signal). The region spanning 39–95 (IKWDKAPCRFCGTGCGVLVGTQNGRIVASQGDPDSPVNRGLNCIKGYFLPKIMYGKD) is the 4Fe-4S Mo/W bis-MGD-type domain. [4Fe-4S] cluster contacts are provided by Cys-46, Cys-49, Cys-53, and Cys-81. Residues Lys-83, Gln-150, Asn-175, Cys-179, 212 to 219 (WGSNMAEM), 243 to 247 (STYEH), 262 to 264 (QTD), Met-372, Gln-376, Asn-482, 508 to 509 (SD), Lys-531, Asp-558, and 718 to 727 (TGRVLEHWHT) contribute to the Mo-bis(molybdopterin guanine dinucleotide) site. Substrate is bound at residue Phe-794. 2 residues coordinate Mo-bis(molybdopterin guanine dinucleotide): Asn-802 and Lys-819.

The protein belongs to the prokaryotic molybdopterin-containing oxidoreductase family. NasA/NapA/NarB subfamily. Component of the periplasmic nitrate reductase NapAB complex composed of NapA and NapB. Requires [4Fe-4S] cluster as cofactor. The cofactor is Mo-bis(molybdopterin guanine dinucleotide). In terms of processing, predicted to be exported by the Tat system. The position of the signal peptide cleavage has not been experimentally proven.

The protein resides in the periplasm. The enzyme catalyses 2 Fe(II)-[cytochrome] + nitrate + 2 H(+) = 2 Fe(III)-[cytochrome] + nitrite + H2O. Its function is as follows. Catalytic subunit of the periplasmic nitrate reductase complex NapAB. Receives electrons from NapB and catalyzes the reduction of nitrate to nitrite. In Yersinia pestis bv. Antiqua (strain Antiqua), this protein is Periplasmic nitrate reductase.